The chain runs to 819 residues: Serine/threonine-protein phosphatase 1 regulatory subunit 10 (819 aa).

The TFIIS N-terminal domain occupies 73–147; sequence KLLNNWLTYA…NDWMAVIRSQ (75 aa). Disordered stretches follow at residues 151-204, 296-391, and 495-785; these read QPAD…KFRS, KIKK…RKTV, and SVPD…GGDM. Composition is skewed to basic and acidic residues over residues 153–165 and 173–190; these read ADKE…EDAK and KTSE…EKPK. Positions 305-327 are enriched in polar residues; sequence SPTSNKASPFDSKSPTEASSLTK. A PP1-binding motif motif is present at residues 386–415; the sequence is KKRKTVSWPEESRLREYFYFELDETERVNV. Residues 495-504 show a composition bias toward basic and acidic residues; the sequence is SVPDTPHEPD. Polar residues-rich tracts occupy residues 533–543 and 560–578; these read MDQSTESQSPD and MGSS…QEIL. Basic and acidic residues predominate over residues 589 to 604; it reads KPEDLMKQPDFSEKIK. Low complexity predominate over residues 606–618; the sequence is LLGSLQNQNQNQG. Pro residues-rich tracts occupy residues 635–663 and 670–695; these read FPPP…PGPN and HGPP…PPPN. Composition is skewed to basic and acidic residues over residues 704 to 715 and 758 to 777; these read HGGERGGMRGGD and HGDH…GDHR. The C3H1-type zinc-finger motif lies at 785–813; it reads MSTRPTCRHFMMKGNCRYENNCAFYHPGI.

In terms of assembly, component of the PNUTS-PP1 complex (also named PTW/PP1 complex).

The protein localises to the nucleus. It localises to the chromosome. Its function is as follows. Substrate-recognition component of the PNUTS-PP1 protein phosphatase complex, a protein phosphatase 1 (PP1) complex that promotes RNA polymerase II transcription pause-release, allowing transcription elongation. Promoter-proximal pausing by RNA polymerase II is a transcription halt following transcription initiation but prior to elongation, which acts as a checkpoint to control that transcripts are favorably configured for transcriptional elongation. The PNUTS-PP1 complex mediates the release of RNA polymerase II from promoter-proximal region of genes by catalyzing dephosphorylation of proteins involved in transcription. In some context, PPP1R10/PNUTS also acts as an inhibitor of protein phosphatase 1 (PP1) activity by preventing access to substrates. The protein is Serine/threonine-protein phosphatase 1 regulatory subunit 10 (ppp1r10) of Xenopus laevis (African clawed frog).